A 439-amino-acid chain; its full sequence is Secreted RxLR effector protein 117 (439 aa).

Positions 1–21 are cleaved as a signal peptide; sequence MRGAYYVLAALLVVASSQIAA. The short motif at 48-65 is the RxLR-dEER element; that stretch reads RYLRGGHDVHDDSANEER.

This sequence belongs to the RxLR effector family.

The protein localises to the secreted. It localises to the host nucleus. Functionally, secreted effector that acts as an elicitor that induces cell death in host plant cells. The protein is Secreted RxLR effector protein 117 of Plasmopara viticola (Downy mildew of grapevine).